Consider the following 104-residue polypeptide: Ribonuclease P protein component 4 (104 aa).

Residues Cys57, Cys60, Cys83, and Cys86 each contribute to the Zn(2+) site.

It belongs to the eukaryotic/archaeal RNase P protein component 4 family. Consists of a catalytic RNA component and at least 4-5 protein subunits. Zn(2+) serves as cofactor.

It is found in the cytoplasm. It carries out the reaction Endonucleolytic cleavage of RNA, removing 5'-extranucleotides from tRNA precursor.. Part of ribonuclease P, a protein complex that generates mature tRNA molecules by cleaving their 5'-ends. The chain is Ribonuclease P protein component 4 from Saccharolobus islandicus (strain M.14.25 / Kamchatka #1) (Sulfolobus islandicus).